The primary structure comprises 939 residues: Serine/threonine-protein kinase STE20 (939 aa).

The segment at 1–87 (MSNDPSAVSE…TNDDDNNVVS (87 aa)) is disordered. An N-acetylserine modification is found at Ser2. Positions 44–57 (TTGTLNVNALQKGT) are enriched in polar residues. Residues Ser87 and Ser165 each carry the phosphoserine modification. Thr167 bears the Phosphothreonine mark. At Ser169 the chain carries Phosphoserine. A compositionally biased stretch (polar residues) spans 176–196 (NATVKHQQPVASSTVNSNKSS). Disordered stretches follow at residues 176-299 (NATV…LRMK) and 311-331 (RNSQDDKRASSSSNNSSSSSI). The residue at position 203 (Thr203) is a Phosphothreonine. Positions 204–231 (PVSTPVISKPSMTTTPRQINSASHSLSN) are enriched in polar residues. Positions 232 to 243 (PKHKQHKPKVKP) are enriched in basic residues. 2 stretches are compositionally biased toward low complexity: residues 251–283 (KPVSVKKSFPSKNPLKNSSPPKKQTEKSYYSSS) and 320–330 (SSSSNNSSSSS). The CRIB domain occupies 337 to 350 (ISTPYNAKHIHHVG). 2 disordered regions span residues 407–487 (KTFN…SASA) and 500–598 (NVSP…ERER). 2 stretches are compositionally biased toward polar residues: residues 408 to 467 (TFNT…SSAN) and 500 to 527 (NVSPLKQTHAPTTPNRTSPNRSSISRNA). Ser418 bears the Phosphoserine mark. The BEM1-binding stretch occupies residues 434-499 (PSTSDSHNYG…IKSPVMNSAA (66 aa)). Phosphoserine occurs at positions 502, 547, and 562. Low complexity predominate over residues 542–552 (TKSKTSPIIST). Over residues 569-578 (ETVTTPTSKP) the composition is skewed to polar residues. Position 573 is a phosphothreonine (Thr573). The segment covering 584 to 597 (LSKELNEKKREERE) has biased composition (basic and acidic residues). Ser585 carries the phosphoserine modification. A Protein kinase domain is found at 620-871 (YANLVKIGQG…ATELLHDEYI (252 aa)). ATP contacts are provided by residues 626-634 (IGQGASGGV) and Lys649. Asp739 acts as the Proton acceptor in catalysis. Phosphothreonine is present on Thr773. A compositionally biased stretch (acidic residues) spans 899 to 908 (ADEDNDDDND). Residues 899-939 (ADEDNDDDNDNEHINKTNNCDDNNDSKETVNLDVTEDDKQK) form a disordered region. At Ser924 the chain carries Phosphoserine. The residue at position 927 (Thr927) is a Phosphothreonine.

This sequence belongs to the protein kinase superfamily. STE Ser/Thr protein kinase family. STE20 subfamily. Interacts with BEM1, CDC42, CLN2, STE4 and the 14-3-3 proteins BMH1 and BMH2. Autophosphorylated and phosphorylated by the CLN2-CDC28 complex in a cell cycle dependent manner. Post-translationally, autophosphorylated on serine residues.

It localises to the cytoplasm. The protein resides in the nucleus. It carries out the reaction L-seryl-[protein] + ATP = O-phospho-L-seryl-[protein] + ADP + H(+). It catalyses the reaction L-threonyl-[protein] + ATP = O-phospho-L-threonyl-[protein] + ADP + H(+). Functionally, MAP4K component of the MAPK pathway required for the mating pheromone response, haploid invasive growth and diploid pseudohyphal development. Links the pheromone response G-protein beta gamma subunits to downstream signaling components. Needed for mating in haploid cells, induction of a mating-specific gene FUS1, induction of mating-specific morphologies, and pheromone-induced proliferation arrest. Required for the regulation of the actin polarization and bud emergence during cell cycle in G1. Involved in the high osmolarity glycerol (HOG) response. Phosphorylates 'Thr-307' and 'Ser-302' or 'Ser-306' of STE11 and 'Ser-357' of MYO3. Phosphorylates histone H2B to form H2BS10ph during meiosis and H(2)O(2)-induced apoptosis. Its interaction with CDC42 is required for both invasive growth and the formation of pseudohyphae. Its interaction with STE4 is required for the pheromone signaling. In Saccharomyces cerevisiae (strain ATCC 204508 / S288c) (Baker's yeast), this protein is Serine/threonine-protein kinase STE20 (STE20).